We begin with the raw amino-acid sequence, 1024 residues long: Importin-8 (1024 aa).

The region spanning 22-102 (AENELNQSYK…RENMVEAIIR (81 aa)) is the Importin N-terminal domain. The interval 896-969 (FGRAQGSEEE…YSTPLDCDNG (74 aa)) is disordered. Composition is skewed to acidic residues over residues 902–917 (SEEEENEEIPSDEDEV) and 934–952 (DNEDDDDEDDDEYWDDEGL).

The protein belongs to the importin beta family.

The protein resides in the cytoplasm. Its subcellular location is the nucleus. Functionally, involved in nuclear protein import, either by acting as autonomous nuclear transport receptor or as an adapter-like protein in association with the importin-beta subunit KPNB1. Acting autonomously, may serve as receptor for nuclear localization signals (NLS) and promote translocation of import substrates through the nuclear pore complex (NPC) by an energy requiring, Ran-dependent mechanism. At the nucleoplasmic side of the NPC, Ran binds to importin, the importin/substrate complex dissociates and importin is re-exported from the nucleus to the cytoplasm where GTP hydrolysis releases Ran. The directionality of nuclear import is thought to be conferred by an asymmetric distribution of the GTP- and GDP-bound forms of Ran between the cytoplasm and nucleus. In vitro mediates the nuclear import of the signal recognition particle protein SRP19. May also be involved in cytoplasm-to-nucleus shuttling of a broad spectrum of other cargos, including Argonaute-microRNAs complexes, the JUN protein, RELA/NF-kappa-B p65 subunit, the translation initiation factor EIF4E and a set of receptor-activated mothers against decapentaplegic homolog (SMAD) transcription factors that play a critical role downstream of the large family of transforming growth factor beta and bone morphogenetic protein (BMP) cytokines. In Danio rerio (Zebrafish), this protein is Importin-8 (ipo8).